Here is a 26-residue protein sequence, read N- to C-terminus: KDGYLMGADGCKLCVLTAPYDYCACE.

It belongs to the long (4 C-C) scorpion toxin superfamily. Sodium channel inhibitor family. Beta subfamily. In terms of tissue distribution, expressed by the venom gland.

The protein resides in the secreted. In terms of biological role, beta toxins bind voltage-independently at site-4 of sodium channels (Nav) and shift the voltage of activation toward more negative potentials thereby affecting sodium channel activation and promoting spontaneous and repetitive firing. This toxin is active against mammals and crustaceans. The sequence is that of Toxin TdII-1 from Tityus discrepans (Venezuelan scorpion).